The primary structure comprises 90 residues: Early nodulin-36A (90 aa).

The sequence is that of Early nodulin-36A from Glycine max (Soybean).